The sequence spans 51 residues: Large ribosomal subunit protein eL39 (51 aa).

It belongs to the eukaryotic ribosomal protein eL39 family. In terms of assembly, interacts with IMPACT.

In Gallus gallus (Chicken), this protein is Large ribosomal subunit protein eL39 (RPL39).